The chain runs to 3147 residues: Probable polyketide synthase 1 (3147 aa).

The region spanning S12–E457 is the Ketosynthase family 3 (KS3) domain. Residues C180 and H319 each act as for beta-ketoacyl synthase activity in the active site. The disordered stretch occupies residues Q345–L369. Positions N354–T364 are enriched in acidic residues. H380 functions as the For beta-ketoacyl synthase activity in the catalytic mechanism. The segment at G672 to Y705 is acyl/malonyl transferase. The For acyl/malonyl transferase activity role is filled by S682. Positions N976 to P1127 are N-terminal hotdog fold. Residues N976–K1298 form the PKS/mFAS DH domain. Catalysis depends on H1014, which acts as the Proton acceptor; for dehydratase activity. A C-terminal hotdog fold region spans residues D1149 to K1298. D1209 functions as the Proton donor; for dehydratase activity in the catalytic mechanism. The Carrier domain maps to S2568 to S2645. The residue at position 2605 (S2605) is an O-(pantetheine 4'-phosphoryl)serine. Positions P2723–L2747 are disordered. Residues S2738 to L2747 are compositionally biased toward polar residues. The interval V2789–V3147 is chalcone synthase. The active site involves C2930.

This sequence in the C-terminal section; belongs to the thiolase-like superfamily. Chalcone/stilbene synthases family. As to quaternary structure, homodimer. Pantetheine 4'-phosphate is required as a cofactor.

It catalyses the reaction (E)-4-coumaroyl-CoA + 3 malonyl-CoA + 3 H(+) = 2',4,4',6'-tetrahydroxychalcone + 3 CO2 + 4 CoA. It participates in secondary metabolite biosynthesis; flavonoid biosynthesis. Functionally, probable polyketide synthase. Produces only acylpyrones; in vitro. The chain is Probable polyketide synthase 1 (stlA) from Dictyostelium discoideum (Social amoeba).